Consider the following 229-residue polypeptide: MFFTMTTPHTIAIDGPAASGKSTLGKLLADHFGYIYFDTGVLYRALTYVALEQAVDLADAAALAKLAQTSNFEVLPPTIADGRQYTVLANGEDITWPLRAANVERNVSQVAAQSAVREALRDIQRQIGKAGHVVMAGRDIGAVILPDAQLKIYLDASVEERAQRRAQELNARGRSISYREVLDDLTRRDAKDAANTFLAADAITITTDGRSPEEVFQAILGLIGVEAQA.

ATP is bound at residue 15–23; it reads GPAASGKST.

Belongs to the cytidylate kinase family. Type 1 subfamily.

It localises to the cytoplasm. The catalysed reaction is CMP + ATP = CDP + ADP. It carries out the reaction dCMP + ATP = dCDP + ADP. This chain is Cytidylate kinase, found in Herpetosiphon aurantiacus (strain ATCC 23779 / DSM 785 / 114-95).